Consider the following 203-residue polypeptide: NAD(P)H dehydrogenase (quinone) (203 aa).

One can recognise a Flavodoxin-like domain in the interval 7-194 (VLVLYHSSYG…SLARKQGAHV (188 aa)). Residues 13 to 18 (SSYGHI) and 82 to 84 (TRF) each bind FMN. Tyr15 provides a ligand contact to NAD(+). Trp102 contacts substrate. FMN contacts are provided by residues 117-122 (STGTGG) and His137.

It belongs to the WrbA family. The cofactor is FMN.

The catalysed reaction is a quinone + NADH + H(+) = a quinol + NAD(+). The enzyme catalyses a quinone + NADPH + H(+) = a quinol + NADP(+). The polypeptide is NAD(P)H dehydrogenase (quinone) (Parvibaculum lavamentivorans (strain DS-1 / DSM 13023 / NCIMB 13966)).